A 373-amino-acid chain; its full sequence is Caspase-4 (373 aa).

Positions 1-59 (MAENKHPDKPLKVLEQLGKEVLTEYLEKLVQSNVLKLKEEDKQKFNNAERSDKRWVFVD) are required for LPS-binding. Positions 1–80 (MAENKHPDKP…MLLQTFFSVD (80 aa)) are excised as a propeptide. In terms of domain architecture, CARD spans 1–91 (MAENKHPDKP…GSHHGEANLE (91 aa)). Position 83 is a phosphoserine (Ser-83). Active-site residues include His-206 and Cys-254. A propeptide spanning residues 267–285 (SSKPQLCRGVDLPRNMEAD) is cleaved from the precursor. Residue Arg-310 is modified to (Microbial infection) ADP-riboxanated arginine.

The protein belongs to the peptidase C14A family. Heterotetramer that consists of two anti-parallel arranged heterodimers, each one formed by a 20 kDa (Caspase-4 subunit p20) and a 10 kDa (Caspase-4 subunit p10) subunit. Upon direct LPS-binding, forms large homooligomers, resulting in its activation. These oligomers are often referred to as 'non-canonical inflammasomes'. In its precursor form, interacts with TMEM214; this interaction is required for association with the endoplasmic reticulum membrane. Interacts with CASP1. Interacts with NOD2. Interacts with Serpinb1a, Serpinb1b and Serpinb1c; these interactions regulate CASP4 activity. As to quaternary structure, heterotetramer that consists of two anti-parallel arranged heterodimers, each one formed by a 20 kDa (Caspase-4 subunit p20) and a 10 kDa (Caspase-4 subunit p10) subunit. In response to activation signals, undergoes autoproteolytic cleavage and activation. Post-translationally, (Microbial infection) ADP-riboxanation by S.flexneri OspC3 blocks CASP4 autoprocessing, preventing CASP4 activation and ability to recognize and cleave GSDMD, thereby thwarting the inflammasome/pyroptosis-mediated defense. In terms of tissue distribution, widely expressed, including in thymus, lung and spleen (at protein level). Very low levels, if any, in the brain.

It localises to the cytoplasm. It is found in the cytosol. Its subcellular location is the endoplasmic reticulum membrane. The protein resides in the mitochondrion. The protein localises to the inflammasome. It localises to the secreted. The catalysed reaction is Strict requirement for Asp at the P1 position and has a preferred cleavage sequence of (Ile/Leu/Val/Phe)-Gly-His-Asp-|-.. Its activity is regulated as follows. Activated by homooligomerization induced by direct binding to cytosolic LPS, in a TLR4-independent manner. In addition to LPS, CASP4/CASP11 may also be activated by oxidized phospholipid 1-palmitoyl-2-arachidonoyl- sn-glycero-3-phosphorylcholine, an oxidized phospholipid (oxPAPC), in dendritic cells, promoting adaptive immunity. The role of oxPAPC is however unclear and another report suggests that oxPAPC competes with LPS-binding and inhibits the non-canonical inflammasome in macrophages. Functionally, inflammatory caspase that acts as the effector of the non-canonical inflammasome by mediating lipopolysaccharide (LPS)-induced pyroptosis. Also indirectly activates the NLRP3 and NLRP6 inflammasomes. Acts as a thiol protease that cleaves a tetrapeptide after an Asp residue at position P1: catalyzes cleavage of CGAS and GSDMD. In contrast to its human ortholog, does not cleave IL18. Effector of the non-canonical inflammasome independently of NLRP3 inflammasome and CASP1: the non-canonical inflammasome promotes pyroptosis through GSDMD cleavage without involving secretion of cytokine IL1B and IL18. In the non-canonical inflammasome, CASP4/CASP11 is activated by direct binding to the lipid A moiety of LPS without the need of an upstream sensor. LPS-binding promotes CASP4/CASP11 activation and CASP4/CASP11-mediated cleavage of GSDMD, followed by pyroptosis of infected cells and their extrusion into the gut lumen. Also indirectly promotes secretion of mature cytokines (IL1A, IL18 and HMGB1) downstream of GSDMD-mediated pyroptosis via activation of the NLRP3 and NLRP6 inflammasomes. Involved in NLRP3-dependent CASP1 activation and IL1B and IL18 secretion in response to non-canonical activators, such as UVB radiation or cholera enterotoxin. Involved in NLRP6 inflammasome-dependent activation in response to lipoteichoic acid (LTA), a cell-wall component of Gram-positive bacteria, which leads to CASP1 activation and IL1B and IL18 secretion. Involved in LPS-induced IL6 secretion; this activity may not require caspase enzymatic activity. The non-canonical inflammasome is required for innate immunity to cytosolic, but not vacuolar, bacteria. Plays a crucial role in the restriction of S.typhimurium replication in colonic epithelial cells during infection. Activation of the non-canonical inflammasome in brain endothelial cells can lead to excessive pyroptosis, leading to blood-brain barrier breakdown. Pyroptosis limits bacterial replication, while cytokine secretion promotes the recruitment and activation of immune cells and triggers mucosal inflammation. May also act as an activator of adaptive immunity in dendritic cells, following activation by oxidized phospholipid 1-palmitoyl-2-arachidonoyl- sn-glycero-3-phosphorylcholine, an oxidized phospholipid (oxPAPC). Cleavage of GSDMD is not strictly dependent on the consensus cleavage site but depends on an exosite interface on CASP4/CASP11 that recognizes and binds the Gasdermin-D, C-terminal (GSDMD-CT) part. In contrast, it does not directly process IL1B. During non-canonical inflammasome activation, cuts CGAS and may play a role in the regulation of antiviral innate immune activation. The sequence is that of Caspase-4 from Mus musculus (Mouse).